Reading from the N-terminus, the 121-residue chain is Large ribosomal subunit protein uL18 (121 aa).

The protein belongs to the universal ribosomal protein uL18 family. In terms of assembly, part of the 50S ribosomal subunit; part of the 5S rRNA/L5/L18/L25 subcomplex. Contacts the 5S and 23S rRNAs.

Its function is as follows. This is one of the proteins that bind and probably mediate the attachment of the 5S RNA into the large ribosomal subunit, where it forms part of the central protuberance. The protein is Large ribosomal subunit protein uL18 of Mesomycoplasma hyopneumoniae (strain J / ATCC 25934 / NCTC 10110) (Mycoplasma hyopneumoniae).